The following is a 356-amino-acid chain: 45 kDa calcium-binding protein (356 aa).

Positions 1–29 (MMSRQAFLCSLGSLYLSLLFVFLLMDVYA) are cleaved as a signal peptide. Asn33 carries N-linked (GlcNAc...) asparagine glycosylation. EF-hand domains follow at residues 92 to 127 (KNRK…KTDE), 131 to 166 (EAVE…SKGL), 227 to 262 (MLKF…TVEN), 272 to 307 (WVKD…MNEY), and 308 to 343 (NALN…FTGS). Asp105, Asp107, Asp109, Lys111, Glu116, Asp144, Asp146, Asp148, His150, Glu155, Asp240, Asp242, Asp244, Lys246, Glu251, Asp285, Asn287, Asp289, Glu296, Asp321, Asn323, Asn325, His327, and Glu332 together coordinate Ca(2+).

Belongs to the CREC family.

The protein resides in the golgi apparatus lumen. Functionally, may regulate calcium-dependent activities in the endoplasmic reticulum lumen or post-ER compartment. The protein is 45 kDa calcium-binding protein (SDF4) of Gallus gallus (Chicken).